The following is a 427-amino-acid chain: Glutamate-1-semialdehyde 2,1-aminomutase (427 aa).

Lys-265 is modified (N6-(pyridoxal phosphate)lysine).

It belongs to the class-III pyridoxal-phosphate-dependent aminotransferase family. HemL subfamily. As to quaternary structure, homodimer. Requires pyridoxal 5'-phosphate as cofactor.

The protein resides in the cytoplasm. The enzyme catalyses (S)-4-amino-5-oxopentanoate = 5-aminolevulinate. It participates in porphyrin-containing compound metabolism; protoporphyrin-IX biosynthesis; 5-aminolevulinate from L-glutamyl-tRNA(Glu): step 2/2. This Pseudomonas aeruginosa (strain UCBPP-PA14) protein is Glutamate-1-semialdehyde 2,1-aminomutase.